A 441-amino-acid chain; its full sequence is Interferon-related developmental regulator 2 (441 aa).

Residues 1–15 (MPRARKGNTPRKGGQ) show a composition bias toward basic residues. The disordered stretch occupies residues 1–72 (MPRARKGNTP…TVDEQGPQED (72 aa)). Residues 63-72 (TVDEQGPQED) are compositionally biased toward acidic residues.

The protein belongs to the IFRD family. Associates with ribosomes; promoting ribosome inactivation.

In terms of biological role, ribosome-binding protein that acts as an inhibitor of mRNA translation by promoting ribosome inactivation. Associates with the P- and E-sites of the ribosome and inserts a C-terminal helix into the mRNA exit channel to preclude translation. This is Interferon-related developmental regulator 2 from Oryctolagus cuniculus (Rabbit).